The chain runs to 349 residues: Protein-glutamate methylesterase/protein-glutamine glutaminase (349 aa).

Residues 5–122 (RVLSVDDSAL…REGMLAYSEM (118 aa)) enclose the Response regulatory domain. Asp56 carries the 4-aspartylphosphate modification. The 193-residue stretch at 152–344 (LLSSEKLIAI…QQMLAKISAG (193 aa)) folds into the CheB-type methylesterase domain. Active-site residues include Ser164, His190, and Asp286.

It belongs to the CheB family. Post-translationally, phosphorylated by CheA. Phosphorylation of the N-terminal regulatory domain activates the methylesterase activity.

It is found in the cytoplasm. The catalysed reaction is [protein]-L-glutamate 5-O-methyl ester + H2O = L-glutamyl-[protein] + methanol + H(+). The enzyme catalyses L-glutaminyl-[protein] + H2O = L-glutamyl-[protein] + NH4(+). In terms of biological role, involved in chemotaxis. Part of a chemotaxis signal transduction system that modulates chemotaxis in response to various stimuli. Catalyzes the demethylation of specific methylglutamate residues introduced into the chemoreceptors (methyl-accepting chemotaxis proteins or MCP) by CheR. Also mediates the irreversible deamidation of specific glutamine residues to glutamic acid. This is Protein-glutamate methylesterase/protein-glutamine glutaminase from Salmonella typhi.